The following is a 342-amino-acid chain: Holliday junction branch migration complex subunit RuvB (342 aa).

Residues 1 to 179 form a large ATPase domain (RuvB-L) region; the sequence is MTNILSPEKS…FGIPMRLNFY (179 aa). ATP is bound by residues Ile-18, Arg-19, Gly-60, Lys-63, Thr-64, Thr-65, 126–128, Arg-169, Tyr-179, and Arg-216; that span reads EDF. Thr-64 contacts Mg(2+). The interval 180–250 is small ATPAse domain (RuvB-S); that stretch reads NTEELKKVLN…ISDFGLKRLE (71 aa). A head domain (RuvB-H) region spans residues 253–342; it reads RIGLDSNDYR…HQFNIFNENE (90 aa). DNA-binding residues include Arg-289, Arg-308, and Arg-313.

The protein belongs to the RuvB family. In terms of assembly, homohexamer. Forms an RuvA(8)-RuvB(12)-Holliday junction (HJ) complex. HJ DNA is sandwiched between 2 RuvA tetramers; dsDNA enters through RuvA and exits via RuvB. An RuvB hexamer assembles on each DNA strand where it exits the tetramer. Each RuvB hexamer is contacted by two RuvA subunits (via domain III) on 2 adjacent RuvB subunits; this complex drives branch migration. In the full resolvosome a probable DNA-RuvA(4)-RuvB(12)-RuvC(2) complex forms which resolves the HJ.

Its subcellular location is the cytoplasm. It catalyses the reaction ATP + H2O = ADP + phosphate + H(+). Its function is as follows. The RuvA-RuvB-RuvC complex processes Holliday junction (HJ) DNA during genetic recombination and DNA repair, while the RuvA-RuvB complex plays an important role in the rescue of blocked DNA replication forks via replication fork reversal (RFR). RuvA specifically binds to HJ cruciform DNA, conferring on it an open structure. The RuvB hexamer acts as an ATP-dependent pump, pulling dsDNA into and through the RuvAB complex. RuvB forms 2 homohexamers on either side of HJ DNA bound by 1 or 2 RuvA tetramers; 4 subunits per hexamer contact DNA at a time. Coordinated motions by a converter formed by DNA-disengaged RuvB subunits stimulates ATP hydrolysis and nucleotide exchange. Immobilization of the converter enables RuvB to convert the ATP-contained energy into a lever motion, pulling 2 nucleotides of DNA out of the RuvA tetramer per ATP hydrolyzed, thus driving DNA branch migration. The RuvB motors rotate together with the DNA substrate, which together with the progressing nucleotide cycle form the mechanistic basis for DNA recombination by continuous HJ branch migration. Branch migration allows RuvC to scan DNA until it finds its consensus sequence, where it cleaves and resolves cruciform DNA. This Rickettsia peacockii (strain Rustic) protein is Holliday junction branch migration complex subunit RuvB.